A 353-amino-acid polypeptide reads, in one-letter code: Ribosome biogenesis protein BRX1 homolog (353 aa).

Residues 1-10 (MAATKRKRRG) show a composition bias toward basic residues. The disordered stretch occupies residues 1-46 (MAATKRKRRGGLAVQAKKLKRDAKDGKLPAKANDVSEEAAEEEKDR). In terms of domain architecture, Brix spans 60–249 (ERILIFSSRG…LIKIFQGSFG (190 aa)). Residue lysine 160 forms a Glycyl lysine isopeptide (Lys-Gly) (interchain with G-Cter in SUMO2) linkage. Serine 261 bears the Phosphoserine mark. Position 276 is an N6-acetyllysine (lysine 276). Residues lysine 314 and lysine 322 each participate in a glycyl lysine isopeptide (Lys-Gly) (interchain with G-Cter in SUMO2) cross-link.

Belongs to the BRX1 family.

It is found in the nucleus. The protein localises to the nucleolus. Required for biogenesis of the 60S ribosomal subunit. This chain is Ribosome biogenesis protein BRX1 homolog (BRIX1), found in Bos taurus (Bovine).